A 321-amino-acid polypeptide reads, in one-letter code: Ribosomal RNA small subunit methyltransferase H (321 aa).

Residues 40 to 42 (GGH), aspartate 60, phenylalanine 84, aspartate 106, and glutamine 113 each bind S-adenosyl-L-methionine.

This sequence belongs to the methyltransferase superfamily. RsmH family.

The protein localises to the cytoplasm. The catalysed reaction is cytidine(1402) in 16S rRNA + S-adenosyl-L-methionine = N(4)-methylcytidine(1402) in 16S rRNA + S-adenosyl-L-homocysteine + H(+). Specifically methylates the N4 position of cytidine in position 1402 (C1402) of 16S rRNA. The polypeptide is Ribosomal RNA small subunit methyltransferase H (Pasteurella multocida (strain Pm70)).